A 363-amino-acid chain; its full sequence is uncharacterized protein (363 aa).

Transmembrane regions (helical) follow at residues 20-40 (WFFT…NTNI), 63-83 (INFA…FLVM), 101-121 (FPLI…GVQS), 141-161 (SVWQ…FTAF), 186-206 (FSLL…IMLA), 227-247 (IFKY…CVVL), and 268-288 (FLIV…WYVL). The segment at 329-363 (PRADLTPNDTLHMESKKKPLSQSPRVVIEEEDVAE) is disordered.

The protein resides in the membrane. This is an uncharacterized protein from Caenorhabditis elegans.